The primary structure comprises 437 residues: Protein farnesyltransferase subunit beta (437 aa).

PFTB repeat units lie at residues 123-164, 174-215, 222-263, 270-312, and 332-374; these read ATDV…CIIG, REKL…SLTN, FEGT…VILK, LKSL…PLLH, and QQAL…SIAQ. Residues 248–251 and 291–294 contribute to the (2E,6E)-farnesyl diphosphate site; these read HGGY and RCNK. The Zn(2+) site is built by Asp297 and Cys299. 300–303 lines the (2E,6E)-farnesyl diphosphate pocket; it reads YSFW. Zn(2+) is bound at residue His362. Phosphothreonine is present on Thr436.

This sequence belongs to the protein prenyltransferase subunit beta family. In terms of assembly, heterodimer of FNTA and FNTB. Zn(2+) is required as a cofactor.

It catalyses the reaction L-cysteinyl-[protein] + (2E,6E)-farnesyl diphosphate = S-(2E,6E)-farnesyl-L-cysteinyl-[protein] + diphosphate. Functionally, essential subunit of the farnesyltransferase complex. Catalyzes the transfer of a farnesyl moiety from farnesyl diphosphate to a cysteine at the fourth position from the C-terminus of several proteins having the C-terminal sequence Cys-aliphatic-aliphatic-X. The sequence is that of Protein farnesyltransferase subunit beta (FNTB) from Bos taurus (Bovine).